The chain runs to 231 residues: Phycobilisome rod-core linker polypeptide cpcG (231 aa).

A PBS-linker domain is found at 11–191 (STQNQRVDGY…PRYGADFKEK (181 aa)).

This sequence belongs to the phycobilisome linker protein family. The phycobilisome is a hemidiscoidal structure that is composed of two distinct substructures: a core complex and a number of rods radiating from the core.

It localises to the plastid. It is found in the chloroplast. The protein localises to the chloroplast thylakoid membrane. Functionally, rod-core linker protein required for attachment of phycocyanin to allophycocyanin in cores of phycobilisomes. Linker polypeptides determine the state of aggregation and the location of the disk-shaped phycobiliprotein units within the phycobilisome and modulate their spectroscopic properties in order to mediate a directed and optimal energy transfer. The chain is Phycobilisome rod-core linker polypeptide cpcG (cpcG) from Porphyra purpurea (Red seaweed).